Here is a 285-residue protein sequence, read N- to C-terminus: Bifunctional protein FolD (285 aa).

NADP(+) is bound by residues 166–168 (GAS) and isoleucine 232.

This sequence belongs to the tetrahydrofolate dehydrogenase/cyclohydrolase family. In terms of assembly, homodimer.

It carries out the reaction (6R)-5,10-methylene-5,6,7,8-tetrahydrofolate + NADP(+) = (6R)-5,10-methenyltetrahydrofolate + NADPH. It catalyses the reaction (6R)-5,10-methenyltetrahydrofolate + H2O = (6R)-10-formyltetrahydrofolate + H(+). It functions in the pathway one-carbon metabolism; tetrahydrofolate interconversion. Its function is as follows. Catalyzes the oxidation of 5,10-methylenetetrahydrofolate to 5,10-methenyltetrahydrofolate and then the hydrolysis of 5,10-methenyltetrahydrofolate to 10-formyltetrahydrofolate. This is Bifunctional protein FolD from Buchnera aphidicola subsp. Schizaphis graminum (strain Sg).